Here is a 662-residue protein sequence, read N- to C-terminus: UPF0313 protein CPR_1216 (662 aa).

The region spanning 296–567 (AIEEVKFSLV…AMQRALLQFK (272 aa)) is the Radical SAM core domain. 3 residues coordinate [4Fe-4S] cluster: Cys310, Cys314, and Cys317. Positions 597 to 662 (RDKNSFGKGN…QRVSKGKKRR (66 aa)) are disordered. Residues 618–632 (SRNENSGRRESEDKK) show a composition bias toward basic and acidic residues. The span at 633–644 (RSSHSKKQRGNK) shows a compositional bias: basic residues.

This sequence belongs to the UPF0313 family. [4Fe-4S] cluster is required as a cofactor.

In Clostridium perfringens (strain SM101 / Type A), this protein is UPF0313 protein CPR_1216.